Here is a 273-residue protein sequence, read N- to C-terminus: Putative pyruvate, phosphate dikinase regulatory protein (273 aa).

Gly153–Thr160 serves as a coordination point for ADP.

This sequence belongs to the pyruvate, phosphate/water dikinase regulatory protein family. PDRP subfamily.

The enzyme catalyses N(tele)-phospho-L-histidyl/L-threonyl-[pyruvate, phosphate dikinase] + ADP = N(tele)-phospho-L-histidyl/O-phospho-L-threonyl-[pyruvate, phosphate dikinase] + AMP + H(+). The catalysed reaction is N(tele)-phospho-L-histidyl/O-phospho-L-threonyl-[pyruvate, phosphate dikinase] + phosphate + H(+) = N(tele)-phospho-L-histidyl/L-threonyl-[pyruvate, phosphate dikinase] + diphosphate. In terms of biological role, bifunctional serine/threonine kinase and phosphorylase involved in the regulation of the pyruvate, phosphate dikinase (PPDK) by catalyzing its phosphorylation/dephosphorylation. This chain is Putative pyruvate, phosphate dikinase regulatory protein, found in Sinorhizobium medicae (strain WSM419) (Ensifer medicae).